The primary structure comprises 237 residues: Segregation and condensation protein A (237 aa).

Belongs to the ScpA family. As to quaternary structure, component of a cohesin-like complex composed of ScpA, ScpB and the Smc homodimer, in which ScpA and ScpB bind to the head domain of Smc. The presence of the three proteins is required for the association of the complex with DNA.

The protein localises to the cytoplasm. In terms of biological role, participates in chromosomal partition during cell division. May act via the formation of a condensin-like complex containing Smc and ScpB that pull DNA away from mid-cell into both cell halves. This is Segregation and condensation protein A from Streptococcus thermophilus (strain ATCC BAA-250 / LMG 18311).